We begin with the raw amino-acid sequence, 382 residues long: 1-deoxy-D-xylulose 5-phosphate reductoisomerase (382 aa).

Residues Thr-10, Gly-11, Ser-12, Ile-13, Asn-38, and Asn-120 each contribute to the NADPH site. 1-deoxy-D-xylulose 5-phosphate is bound at residue Lys-121. NADPH is bound at residue Glu-122. Residue Asp-146 participates in Mn(2+) binding. Residues Ser-147, Glu-148, Ser-172, and His-195 each contribute to the 1-deoxy-D-xylulose 5-phosphate site. Residue Glu-148 coordinates Mn(2+). An NADPH-binding site is contributed by Gly-201. 1-deoxy-D-xylulose 5-phosphate contacts are provided by Ser-208, Asn-213, Lys-214, and Glu-217. Glu-217 provides a ligand contact to Mn(2+).

It belongs to the DXR family. The cofactor is Mg(2+). Mn(2+) serves as cofactor.

The enzyme catalyses 2-C-methyl-D-erythritol 4-phosphate + NADP(+) = 1-deoxy-D-xylulose 5-phosphate + NADPH + H(+). The protein operates within isoprenoid biosynthesis; isopentenyl diphosphate biosynthesis via DXP pathway; isopentenyl diphosphate from 1-deoxy-D-xylulose 5-phosphate: step 1/6. Functionally, catalyzes the NADPH-dependent rearrangement and reduction of 1-deoxy-D-xylulose-5-phosphate (DXP) to 2-C-methyl-D-erythritol 4-phosphate (MEP). The chain is 1-deoxy-D-xylulose 5-phosphate reductoisomerase from Caldanaerobacter subterraneus subsp. tengcongensis (strain DSM 15242 / JCM 11007 / NBRC 100824 / MB4) (Thermoanaerobacter tengcongensis).